Here is a 290-residue protein sequence, read N- to C-terminus: Glucuronoxylan 4-O-methyltransferase 2 (290 aa).

Residues 8–28 traverse the membrane as a helical segment; sequence FISSKLIFICCSILVLFILFL.

It belongs to the methyltransferase superfamily. Expressed in roots, rosette leaves and stems.

Its subcellular location is the golgi apparatus membrane. It catalyses the reaction glucuronoxylan D-glucuronate + n S-adenosyl-L-methionine = glucuronoxylan 4-O-methyl-D-glucuronate + n S-adenosyl-L-homocysteine + n H(+). Functionally, methyltransferase catalyzing 4-O-methylation of glucuronic acid side chains on xylan. In Arabidopsis thaliana (Mouse-ear cress), this protein is Glucuronoxylan 4-O-methyltransferase 2 (GXM2).